Here is a 295-residue protein sequence, read N- to C-terminus: Protoheme IX farnesyltransferase (295 aa).

9 helical membrane-spanning segments follow: residues 8–28, 35–55, 74–94, 106–125, 132–152, 162–182, 208–228, 233–253, and 264–284; these read VTKP…FLLA, YPLF…GCVF, VLVK…LLGI, PLAM…VYSL, VYGT…GYCA, LILL…IAIF, ITLY…GGYA, LVVA…GYKA, and FVFS…DFMV.

It belongs to the UbiA prenyltransferase family. Protoheme IX farnesyltransferase subfamily.

The protein resides in the cell inner membrane. It carries out the reaction heme b + (2E,6E)-farnesyl diphosphate + H2O = Fe(II)-heme o + diphosphate. It functions in the pathway porphyrin-containing compound metabolism; heme O biosynthesis; heme O from protoheme: step 1/1. Its function is as follows. Converts heme B (protoheme IX) to heme O by substitution of the vinyl group on carbon 2 of heme B porphyrin ring with a hydroxyethyl farnesyl side group. The chain is Protoheme IX farnesyltransferase from Cronobacter sakazakii (strain ATCC BAA-894) (Enterobacter sakazakii).